A 282-amino-acid chain; its full sequence is Homeobox-leucine zipper protein HAT1 (282 aa).

Residues L71–R134 are disordered. Positions G76 to S89 are enriched in low complexity. The homeobox DNA-binding region spans T132 to Q191. A leucine-zipper region spans residues L199–L220.

It belongs to the HD-ZIP homeobox family. Class II subfamily. Interacts with BZIP30.

The protein localises to the nucleus. In terms of biological role, probable transcription factor. The chain is Homeobox-leucine zipper protein HAT1 (HAT1) from Arabidopsis thaliana (Mouse-ear cress).